We begin with the raw amino-acid sequence, 309 residues long: Probable sugar phosphate/phosphate translocator At5g05820 (309 aa).

The next 10 helical transmembrane spans lie at 9 to 29 (FFTIGLVASWYSSNIGVLLLN), 42 to 62 (IFLTMCHMTACSLLSYVAIAW), 77 to 97 (FFKIAALSLVFCVSVVFGNIS), 100 to 120 (FLPVSFNQAIGATTPFFTAVF), 130 to 150 (AWLTYFTLVPVVTGVVIASGG), 154 to 174 (FHLFGFLMCIAATAARALKSV), 192 to 212 (LLLYMAPIAVVLLLPATLIME), 229 to 249 (IVWYLLFNSALAYLVNLTNFL), 256 to 278 (ALTLQVLGNAKGAVAVVVSILIF), and 282 to 301 (VSVTGMLGYSLTVCGVILYS). Residues 30–147 (KYLLSNYGFK…VPVVTGVVIA (118 aa)) enclose the EamA domain.

The protein belongs to the TPT transporter family. TPT (TC 2.A.7.9) subfamily.

The protein localises to the membrane. This chain is Probable sugar phosphate/phosphate translocator At5g05820, found in Arabidopsis thaliana (Mouse-ear cress).